A 593-amino-acid polypeptide reads, in one-letter code: Translocon at the outer membrane of chloroplasts 64 (593 aa).

At 1-4 (MKSM) the chain is on the chloroplast intermembrane side. The helical transmembrane segment at 5–25 (ASPSSQIWVILGLGLAGIYVL) threads the bilayer. At 26–144 (TRKLTQAVKE…NPAVPNRVPG (119 aa)) the chain is on the cytoplasmic side. A helical membrane pass occupies residues 145–165 (GSSSGAAVAVAANFVDFSLGV). At 166 to 403 (DTSGGVRVPA…LSHDYQSRAL (238 aa)) the chain is on the chloroplast intermembrane side. The helical transmembrane segment at 404–424 (SLLSIASISGCCQVTVPLGFF) threads the bilayer. Topologically, residues 425-593 (DKNPVSVSLI…SAERLRKLFQ (169 aa)) are cytoplasmic. TPR repeat units lie at residues 477–510 (AEIS…CGNN), 511–544 (ATYY…DKKN), and 545–578 (VKAY…EPTN).

Part of the Toc complex and of the intermembrane space complex. Interacts with TOC12, TIC22 and with the cytosolic domain of TOC34 in a GTP dependent manner. Interacts (via TPR region) with HSP90 and with HSP70 with low efficiency.

It localises to the plastid. The protein resides in the chloroplast outer membrane. Functionally, chaperone receptor mediating Hsp90-dependent protein targeting to chloroplasts. Bi-functional preprotein receptor acting on both sides of the membrane. In Pisum sativum (Garden pea), this protein is Translocon at the outer membrane of chloroplasts 64 (TOC64).